Consider the following 382-residue polypeptide: MNSLDLPKAPQDTRVVVAMSGGVDSSVVAGLLKRQGYDVVGITLQLYDHGAATHRRGACCAGQDIHDARRAAETLGIPHYVLDYEDRFREAVIDRFADSYIHGETPIPCVECNRSIKFRDLLATALDLGADALATGHYVASRPRPGGSRALYRALDPARDQSYFLYATTAEQLDVLRFPLGELPKDETRRLAREFGLSVADKPDSQDICFVPQGRYQDVIARLRPDSVRPGEIVHLDGRTLGRHDGIIGFTVGQRRGLKLATGEPLYVVRLDPETARVVVGPREALATSVIRLAETNWLGDEPLTELDGMPVAVRVRSTREPRPATLRWNRAASCAEVMLATPEDGVSPGQACAIYADEGPRARVLGGGTILRVEASRREAA.

Residues 18-25 (AMSGGVDS) and Leu44 contribute to the ATP site. Cys112 (nucleophile) is an active-site residue. The cysteines at positions 112 and 209 are disulfide-linked. ATP is bound at residue Gly136. The interaction with tRNA stretch occupies residues 159-161 (RDQ). The active-site Cysteine persulfide intermediate is the Cys209.

Belongs to the MnmA/TRMU family.

The protein localises to the cytoplasm. The enzyme catalyses S-sulfanyl-L-cysteinyl-[protein] + uridine(34) in tRNA + AH2 + ATP = 2-thiouridine(34) in tRNA + L-cysteinyl-[protein] + A + AMP + diphosphate + H(+). Catalyzes the 2-thiolation of uridine at the wobble position (U34) of tRNA, leading to the formation of s(2)U34. The sequence is that of tRNA-specific 2-thiouridylase MnmA from Methylobacterium nodulans (strain LMG 21967 / CNCM I-2342 / ORS 2060).